We begin with the raw amino-acid sequence, 250 residues long: Probable transcriptional regulatory protein Emin_1151 (250 aa).

It belongs to the TACO1 family.

The protein resides in the cytoplasm. This chain is Probable transcriptional regulatory protein Emin_1151, found in Elusimicrobium minutum (strain Pei191).